A 250-amino-acid polypeptide reads, in one-letter code: Mediator of RNA polymerase II transcription subunit 8 (250 aa).

Residues 217 to 250 are disordered; it reads SPMSAVSPGAGPLGKMPSGIKTNIKSANQVHPYR. Residues 236 to 250 are compositionally biased toward polar residues; sequence IKTNIKSANQVHPYR.

The protein belongs to the Mediator complex subunit 8 family. As to quaternary structure, component of the Mediator complex.

It is found in the nucleus. Component of the Mediator complex, a coactivator involved in the regulated transcription of nearly all RNA polymerase II-dependent genes. Mediator functions as a bridge to convey information from gene-specific regulatory proteins to the basal RNA polymerase II transcription machinery. Mediator is recruited to promoters by direct interactions with regulatory proteins and serves as a scaffold for the assembly of a functional preinitiation complex with RNA polymerase II and the general transcription factors. In Aedes aegypti (Yellowfever mosquito), this protein is Mediator of RNA polymerase II transcription subunit 8 (MED8).